The sequence spans 849 residues: MAP7 domain-containing protein 1 (849 aa).

Disordered regions lie at residues 1-151 (MESG…REER) and 186-210 (EQRL…EKNK). Over residues 24 to 41 (EPRPSPEGDPSPPPPPTP) the composition is skewed to pro residues. Phosphothreonine occurs at positions 49 and 53. A phosphoserine mark is found at S72 and S95. T99 bears the Phosphothreonine mark. A phosphoserine mark is found at S115 and S118. The residue at position 120 (T120) is a Phosphothreonine. Residues S125 and S127 each carry the phosphoserine modification. Positions 132–151 (QDVKKAGERHKLAKERREER) are enriched in basic and acidic residues. Residues 167 to 223 (EKAKALREKQLQERRRRLEEQRLKAEQRRAALEERQRQKLEKNKERYEAAIQRSVKK) adopt a coiled-coil conformation. S256, S275, S315, S368, and S401 each carry phosphoserine. The interval 318–815 (TLPRNGRDQG…GFPAKGTAGD (498 aa)) is disordered. A compositionally biased stretch (basic and acidic residues) spans 407 to 437 (RRLEATPVQKKEKKDKERENEKEKSALARER). Residues S444, S448, S454, and S460 each carry the phosphoserine modification. The span at 457–474 (AELSTKSKARPTSPSTTW) shows a compositional bias: polar residues. Residue K462 forms a Glycyl lysine isopeptide (Lys-Gly) (interchain with G-Cter in SUMO2) linkage. 2 positions are modified to phosphoserine: S479 and S496. A compositionally biased stretch (pro residues) spans 479–497 (SPCPSPGPGHTLPPKPPSP). Residues 523 to 539 (PEDKNHSKSRTAEEKEP) are compositionally biased toward basic and acidic residues. A compositionally biased stretch (pro residues) spans 542-556 (PASPAPSPVPSPTPA). 3 positions are modified to phosphoserine: S544, S548, and S552. T554 is modified (phosphothreonine). A compositionally biased stretch (low complexity) spans 568–582 (PPDTAVPAVPTVPTF). Residues 602–724 (TTDREEATRL…QERRKRLEEI (123 aa)) are a coiled coil. Over residues 603 to 743 (TDREEATRLL…AETKKQDGKE (141 aa)) the composition is skewed to basic and acidic residues.

It belongs to the MAP7 family.

The protein resides in the cytoplasm. The protein localises to the cytoskeleton. It is found in the spindle. Its subcellular location is the microtubule organizing center. It localises to the centrosome. The protein resides in the midbody. In terms of biological role, microtubule-stabilizing protein involved in the control of cell motility and neurite outgrowth. Facilitate microtubule stabilization through the maintenance of acetylated stable microtubules. This is MAP7 domain-containing protein 1 (Map7d1) from Rattus norvegicus (Rat).